The sequence spans 80 residues: Secreted transmembrane peptide 3 (80 aa).

The first 27 residues, 1-27 (MGLKMSSNALLLSLFLLLLCLFSEIGG), serve as a signal peptide directing secretion. The interval 44–80 (IATPPSLTCGGQRLGGPQPRLSPCPRPRPRPRPRTGS) is disordered. An SCOOP motif motif is present at residues 62 to 80 (PRLSPCPRPRPRPRPRTGS). The span at 70–80 (PRPRPRPRTGS) shows a compositional bias: basic residues.

This sequence belongs to the serine rich endogenous peptide (SCOOP) phytocytokine family. As to quaternary structure, interacts with MIK2 (via extracellular leucine-rich repeat domain); this interaction triggers the formation of complex between MIK2 and the BAK1/SERK3 and SERK4 coreceptors, and subsequent BAK1 activation by phosphorylation. Mostly expressed in leaves, and, to a lower extent, in roots, stems, siliques, seeds and flowers.

The protein resides in the cell membrane. The protein localises to the secreted. It localises to the extracellular space. It is found in the apoplast. Its subcellular location is the endoplasmic reticulum. The protein resides in the golgi apparatus. Brassicaceae-specific phytocytokine (plant endogenous peptide released into the apoplast) perceived by MIK2 in a BAK1/SERK3 and SERK4 coreceptors-dependent manner, that modulates various physiological and antimicrobial processes including growth prevention and reactive oxygen species (ROS) response regulation. In Arabidopsis thaliana (Mouse-ear cress), this protein is Secreted transmembrane peptide 3.